The chain runs to 197 residues: FMN-dependent NADH:quinone oxidoreductase 1 (197 aa).

FMN contacts are provided by residues Ser10, 16–18, 93–96, and 137–140; these read SQS, MYNF, and TRGG.

It belongs to the azoreductase type 1 family. As to quaternary structure, homodimer. FMN serves as cofactor.

It catalyses the reaction 2 a quinone + NADH + H(+) = 2 a 1,4-benzosemiquinone + NAD(+). The catalysed reaction is N,N-dimethyl-1,4-phenylenediamine + anthranilate + 2 NAD(+) = 2-(4-dimethylaminophenyl)diazenylbenzoate + 2 NADH + 2 H(+). Functionally, quinone reductase that provides resistance to thiol-specific stress caused by electrophilic quinones. In terms of biological role, also exhibits azoreductase activity. Catalyzes the reductive cleavage of the azo bond in aromatic azo compounds to the corresponding amines. The chain is FMN-dependent NADH:quinone oxidoreductase 1 from Photobacterium profundum (strain SS9).